The following is a 396-amino-acid chain: Phosphoglycerate kinase (396 aa).

Residues Asp19 to Asn21, Arg34, His57 to Lys60, Arg116, and Arg153 each bind substrate. ATP-binding positions include Lys204, Glu324, and Gly351–Thr354.

Belongs to the phosphoglycerate kinase family. As to quaternary structure, monomer.

The protein resides in the cytoplasm. It carries out the reaction (2R)-3-phosphoglycerate + ATP = (2R)-3-phospho-glyceroyl phosphate + ADP. The protein operates within carbohydrate degradation; glycolysis; pyruvate from D-glyceraldehyde 3-phosphate: step 2/5. This Maridesulfovibrio salexigens (strain ATCC 14822 / DSM 2638 / NCIMB 8403 / VKM B-1763) (Desulfovibrio salexigens) protein is Phosphoglycerate kinase.